A 505-amino-acid polypeptide reads, in one-letter code: L-arabinose isomerase (505 aa).

Mn(2+) is bound by residues glutamate 308, glutamate 335, histidine 352, and histidine 453.

Belongs to the arabinose isomerase family. The cofactor is Mn(2+).

It catalyses the reaction beta-L-arabinopyranose = L-ribulose. It participates in carbohydrate degradation; L-arabinose degradation via L-ribulose; D-xylulose 5-phosphate from L-arabinose (bacterial route): step 1/3. Catalyzes the conversion of L-arabinose to L-ribulose. The sequence is that of L-arabinose isomerase from Bifidobacterium longum (strain DJO10A).